The following is a 217-amino-acid chain: L-lactate dehydrogenase B chain (217 aa).

Residue asparagine 22 coordinates NAD(+). Residues asparagine 22 and arginine 53 each coordinate substrate. The active-site Proton acceptor is histidine 77. The residue at position 123 (tyrosine 123) is a Phosphotyrosine. Threonine 132 lines the substrate pocket. The residue at position 212 (lysine 212) is an N6-acetyllysine.

This sequence belongs to the LDH/MDH superfamily. LDH family. As to quaternary structure, homotetramer. Interacts with PTEN upstream reading frame protein MP31; the interaction leads to inhibition of mitochondrial lactate dehydrogenase activity, preventing conversion of lactate to pyruvate in mitochondria.

The protein localises to the cytoplasm. The protein resides in the mitochondrion inner membrane. The catalysed reaction is (S)-lactate + NAD(+) = pyruvate + NADH + H(+). It functions in the pathway fermentation; pyruvate fermentation to lactate; (S)-lactate from pyruvate: step 1/1. Functionally, interconverts simultaneously and stereospecifically pyruvate and lactate with concomitant interconversion of NADH and NAD(+). The protein is L-lactate dehydrogenase B chain (LDHB) of Oryctolagus cuniculus (Rabbit).